A 38-amino-acid polypeptide reads, in one-letter code: Photosystem II reaction center protein L (38 aa).

A helical transmembrane segment spans residues 17-37 (SLYWGLLLIFVLAVLFSSYFF).

The protein belongs to the PsbL family. In terms of assembly, PSII is composed of 1 copy each of membrane proteins PsbA, PsbB, PsbC, PsbD, PsbE, PsbF, PsbH, PsbI, PsbJ, PsbK, PsbL, PsbM, PsbT, PsbX, PsbY, PsbZ, Psb30/Ycf12, at least 3 peripheral proteins of the oxygen-evolving complex and a large number of cofactors. It forms dimeric complexes.

The protein localises to the plastid. The protein resides in the chloroplast thylakoid membrane. One of the components of the core complex of photosystem II (PSII). PSII is a light-driven water:plastoquinone oxidoreductase that uses light energy to abstract electrons from H(2)O, generating O(2) and a proton gradient subsequently used for ATP formation. It consists of a core antenna complex that captures photons, and an electron transfer chain that converts photonic excitation into a charge separation. This subunit is found at the monomer-monomer interface and is required for correct PSII assembly and/or dimerization. This is Photosystem II reaction center protein L from Ephedra sinica (Chinese ephedra).